The following is a 465-amino-acid chain: Hexokinase type 1 (465 aa).

One can recognise a Hexokinase domain in the interval 8–447 (EEDFPEVYKV…CGVGAAIMAG (440 aa)). The segment at 65–197 (TGRERGQFLA…EISVDVMGII (133 aa)) is hexokinase small subdomain. K88 is a binding site for ATP. Residues 139-165 (PLGIAFAFTLKKLALDVGILVSWTKEF) are glucose-binding. Residues 198–436 (NVGAGSLLAL…YNFEFVITQD (239 aa)) form a hexokinase large subdomain region.

It belongs to the hexokinase family.

The enzyme catalyses a D-hexose + ATP = a D-hexose 6-phosphate + ADP + H(+). The catalysed reaction is D-mannose + ATP = D-mannose 6-phosphate + ADP + H(+). It carries out the reaction D-fructose + ATP = D-fructose 6-phosphate + ADP + H(+). It catalyses the reaction D-glucose + ATP = D-glucose 6-phosphate + ADP + H(+). Its pathway is carbohydrate metabolism; hexose metabolism. It functions in the pathway carbohydrate degradation; glycolysis; D-glyceraldehyde 3-phosphate and glycerone phosphate from D-glucose: step 1/4. In terms of biological role, catalyzes the phosphorylation of various hexoses to hexose 6-phosphate. This is Hexokinase type 1 (Hex-t1) from Drosophila melanogaster (Fruit fly).